The primary structure comprises 1120 residues: Putative GTPase-activating protein AN11010 (1120 aa).

The Rab-GAP TBC domain maps to 291–479; the sequence is GLPNRLRGEI…RVLDVFFLEG (189 aa). Disordered regions lie at residues 673–702, 859–903, 960–979, 1017–1068, and 1081–1120; these read DSPGPSRKQSDSGSFRGLGRPTMNKRPSPA, DEVK…PNNP, AAKQQPTSSGPTVAGASGGI, RNAL…ETDR, and GKDDVSLLDDKDSHQESSSGQRTAAGSDDKVVSKVVEFES. The segment covering 864–878 has biased composition (low complexity); that stretch reads ESTPSPEGETPGTPS. Positions 960 to 970 are enriched in polar residues; the sequence is AAKQQPTSSGP. The span at 1023–1032 shows a compositional bias: acidic residues; the sequence is DDDDEDDEDD. Basic and acidic residues-rich tracts occupy residues 1057-1068 and 1081-1095; these read DPERRSVRETDR and GKDDVSLLDDKDSHQ.

The polypeptide is Putative GTPase-activating protein AN11010 (Emericella nidulans (strain FGSC A4 / ATCC 38163 / CBS 112.46 / NRRL 194 / M139) (Aspergillus nidulans)).